A 290-amino-acid polypeptide reads, in one-letter code: Protease HtpX homolog (290 aa).

A run of 2 helical transmembrane segments spans residues 4–24 and 39–59; these read IFLF…VLSL and PMLL…SLLI. His-144 contributes to the Zn(2+) binding site. Residue Glu-145 is part of the active site. His-148 contacts Zn(2+). The next 2 membrane-spanning stretches (helical) occupy residues 159 to 179 and 197 to 217; these read LVQG…GYFV and ITVI…VAWF. Glu-222 is a Zn(2+) binding site.

The protein belongs to the peptidase M48B family. Zn(2+) serves as cofactor.

It is found in the cell inner membrane. The chain is Protease HtpX homolog from Janthinobacterium sp. (strain Marseille) (Minibacterium massiliensis).